A 484-amino-acid chain; its full sequence is MSASRPAAVMVLAAGEGTRMKSRRPKVLHEICGRSLLGHVLAAVAELEPQRTVVVVGHAREQVTEHLKSIAPHAITALQEEQKGTGHAVRMAIEALRAQNVELTGTVVLTCGDTPLLRGATLRDLVAAHEAEGNAVTILSARVPDPTGYGRIVRDAAGAVTGIVEHADATEEQRAVDEINSGMYAFDGALLSQVVHRLSADNAKGEEYITDAVALLRGDGHRVGAYIAPDRTEVEGVNDRVQLAEARRLLNARLLEQLMRDGVTVVDPASTWVDVDVRVGRDAVLEPQTQLQGRTVIGEGAQVGPATVLCDTEVGEDAVVSHTVAREAVIGPEATVGPYAYLRPGARLDRGVKIGTFVEVKNSTVGEGSKVPHLTYVGDADIGKGVNIGASSVFVNYDGVNKHRTVIGDYARTGSDTMFVAPVRVGDGAYTGAGTVVREDVPPGALAVSAGPQRTIEGWVERKRPGTPAAQAAERARARSEEDR.

The segment at 1–240 (MSASRPAAVM…RTEVEGVNDR (240 aa)) is pyrophosphorylase. Residues 12 to 15 (LAAG), Lys26, Gln79, and 84 to 85 (GT) each bind UDP-N-acetyl-alpha-D-glucosamine. Asp113 is a binding site for Mg(2+). UDP-N-acetyl-alpha-D-glucosamine-binding residues include Gly150, Glu165, Asn180, and Asn238. Position 238 (Asn238) interacts with Mg(2+). The interval 241-261 (VQLAEARRLLNARLLEQLMRD) is linker. An N-acetyltransferase region spans residues 262–484 (GVTVVDPAST…RARARSEEDR (223 aa)). UDP-N-acetyl-alpha-D-glucosamine-binding residues include Arg343 and Lys361. His373 serves as the catalytic Proton acceptor. Residues Tyr376 and Asn387 each coordinate UDP-N-acetyl-alpha-D-glucosamine. Acetyl-CoA-binding positions include Ala390, 396 to 397 (NY), Ser415, and Ala433. Residues 457-484 (EGWVERKRPGTPAAQAAERARARSEEDR) form a disordered region. Over residues 474–484 (ERARARSEEDR) the composition is skewed to basic and acidic residues.

The protein in the N-terminal section; belongs to the N-acetylglucosamine-1-phosphate uridyltransferase family. In the C-terminal section; belongs to the transferase hexapeptide repeat family. Homotrimer. Mg(2+) serves as cofactor.

It localises to the cytoplasm. It catalyses the reaction alpha-D-glucosamine 1-phosphate + acetyl-CoA = N-acetyl-alpha-D-glucosamine 1-phosphate + CoA + H(+). The enzyme catalyses N-acetyl-alpha-D-glucosamine 1-phosphate + UTP + H(+) = UDP-N-acetyl-alpha-D-glucosamine + diphosphate. The protein operates within nucleotide-sugar biosynthesis; UDP-N-acetyl-alpha-D-glucosamine biosynthesis; N-acetyl-alpha-D-glucosamine 1-phosphate from alpha-D-glucosamine 6-phosphate (route II): step 2/2. It functions in the pathway nucleotide-sugar biosynthesis; UDP-N-acetyl-alpha-D-glucosamine biosynthesis; UDP-N-acetyl-alpha-D-glucosamine from N-acetyl-alpha-D-glucosamine 1-phosphate: step 1/1. Its pathway is bacterial outer membrane biogenesis; LPS lipid A biosynthesis. In terms of biological role, catalyzes the last two sequential reactions in the de novo biosynthetic pathway for UDP-N-acetylglucosamine (UDP-GlcNAc). The C-terminal domain catalyzes the transfer of acetyl group from acetyl coenzyme A to glucosamine-1-phosphate (GlcN-1-P) to produce N-acetylglucosamine-1-phosphate (GlcNAc-1-P), which is converted into UDP-GlcNAc by the transfer of uridine 5-monophosphate (from uridine 5-triphosphate), a reaction catalyzed by the N-terminal domain. This is Bifunctional protein GlmU from Thermobifida fusca (strain YX).